A 480-amino-acid chain; its full sequence is Aspartyl/glutamyl-tRNA(Asn/Gln) amidotransferase subunit B (480 aa).

The protein belongs to the GatB/GatE family. GatB subfamily. As to quaternary structure, heterotrimer of A, B and C subunits.

The enzyme catalyses L-glutamyl-tRNA(Gln) + L-glutamine + ATP + H2O = L-glutaminyl-tRNA(Gln) + L-glutamate + ADP + phosphate + H(+). It catalyses the reaction L-aspartyl-tRNA(Asn) + L-glutamine + ATP + H2O = L-asparaginyl-tRNA(Asn) + L-glutamate + ADP + phosphate + 2 H(+). Its function is as follows. Allows the formation of correctly charged Asn-tRNA(Asn) or Gln-tRNA(Gln) through the transamidation of misacylated Asp-tRNA(Asn) or Glu-tRNA(Gln) in organisms which lack either or both of asparaginyl-tRNA or glutaminyl-tRNA synthetases. The reaction takes place in the presence of glutamine and ATP through an activated phospho-Asp-tRNA(Asn) or phospho-Glu-tRNA(Gln). In Saccharophagus degradans (strain 2-40 / ATCC 43961 / DSM 17024), this protein is Aspartyl/glutamyl-tRNA(Asn/Gln) amidotransferase subunit B.